A 235-amino-acid polypeptide reads, in one-letter code: Derlin-3 (235 aa).

At 1 to 22 (MAWQGLAAEFLQVPAVTRAYTA) the chain is on the cytoplasmic side. The chain crosses the membrane as a helical span at residues 23–43 (ACVLTTAAVQLELLSPFQLYF). Residues 44-58 (NPHLVFRKFQVWRLV) are Lumenal-facing. A helical transmembrane segment spans residues 59-79 (TNFLFFGPLGFSFFFNMLFVF). Over 80–98 (RYCRMLEEGSFRGRTADFV) the chain is Cytoplasmic. A helical membrane pass occupies residues 99–119 (FMFLFGGVLMTLLGLLGSLFF). The Lumenal portion of the chain corresponds to 120 to 157 (LGQALMAMLVYVWSRRSPRVRVNFFGLLTFQAPFLPWA). The chain crosses the membrane as a helical span at residues 158–178 (LMGFSLLLGNSILVDLLGIAV). At 179-235 (GHIYYFLEDVFPNQPGGKRLLQTPGFLKLLLDAPAEDPNYLPLPEEQPGPHLPPPQQ) the chain is on the cytoplasmic side. Positions 216 to 235 (PNYLPLPEEQPGPHLPPPQQ) are disordered. A compositionally biased stretch (pro residues) spans 223-235 (EEQPGPHLPPPQQ).

The protein belongs to the derlin family. In terms of assembly, forms homo- and heterooligomers with DERL2 and, to a lesser extent, with DERL1. Interacts with VCP and EDEM1. Interacts with SELENOK and SELENOS. Interacts with the signal recognition particle/SRP and the SRP receptor; in the process of endoplasmic reticulum stress-induced pre-emptive quality control. As to expression, unlike DERL1 and DERL2, restricted to several tissues. Expressed at high levels in placenta, pancreas, spleen and small intestine.

The protein localises to the endoplasmic reticulum membrane. In terms of biological role, functional component of endoplasmic reticulum-associated degradation (ERAD) for misfolded lumenal glycoproteins, but not that of misfolded nonglycoproteins. May act by forming a channel that allows the retrotranslocation of misfolded glycoproteins into the cytosol where they are ubiquitinated and degraded by the proteasome. May mediate the interaction between VCP and the misfolded glycoproteins. May be involved in endoplasmic reticulum stress-induced pre-emptive quality control, a mechanism that selectively attenuates the translocation of newly synthesized proteins into the endoplasmic reticulum and reroutes them to the cytosol for proteasomal degradation. This is Derlin-3 from Homo sapiens (Human).